The chain runs to 262 residues: Small ribosomal subunit protein eS4x (262 aa).

The S4 RNA-binding domain maps to 42–104 (LPLVLIIRNR…TNENFRLLYD (63 aa)).

It belongs to the eukaryotic ribosomal protein eS4 family.

The protein resides in the cytoplasm. The protein is Small ribosomal subunit protein eS4x (RPS4D) of Arabidopsis thaliana (Mouse-ear cress).